A 542-amino-acid chain; its full sequence is Adenine deaminase (542 aa).

The protein belongs to the metallo-dependent hydrolases superfamily. Adenine deaminase family. Mn(2+) serves as cofactor.

It catalyses the reaction adenine + H2O + H(+) = hypoxanthine + NH4(+). The chain is Adenine deaminase from Methanosphaera stadtmanae (strain ATCC 43021 / DSM 3091 / JCM 11832 / MCB-3).